The sequence spans 2111 residues: MFNFPHPAIDLASRMKSSPLMAGGSSSASSEDLFSPPMMEDLDTPMTEYPMGSPPRMPYRGEDIEIAFLRSEASIKKSSLFNDKFAATLDDLSARPIDSASLIGKLQSMTRSVREILDSGDQLVHEDGPQEILKQFVRVVNKHLCQDEDIHTVLAPLALEPEEKFHIIQTYYQAISMTQFVSPKWTSSLLSDALCRRANIVTVFNGQGVEGYFSELQHLYDTYGGLLAEPLYALSKQLKGLASDVRAQDMYPHGLDVIGWLENPEARPSTDYLLSAPVSQPLIGLVQLLNYAITCKILNKSPGEFARHLSGSAGHSQGIVVAAMLATVVSWPTFFDAASTALQVLFWIGCRSQQCYPSHSIPPSLVDQSERLSPMLSVKGASRESLLKYLDEHNRHLPPAQQGSLALINGRQQFVVAGNPLSLYAFANKLRAASNNSSTTNTARVPFSQRPLLITARFLPISVPFHTSLLEDAEAQILEDLRSVHVPGNSLLFPVLRTDNGADLREFDNLVPELVHMVVCGVVDWDRATRFPTATHLLDFGPGRETGIGALLASTKAGTAARVILSTTLTGPSKKTLGYMPELLSRRRPVVYNTSWEQDFAPRLVRVGDDILLDTKFSRALGLPPVMVAGMTPTTVSPDFVAEVINANYHIEIAGGGYHDAAGMRSALTRLVNLIPAGRGITVNLIYANPRAMGWQIPLLVQLRQEGLPITGLTIGAGVPSPDIASEYIRDLGLSHISFKPGSKEAIDNVLRIAESNPGFPIILQWTGGRAGGHHSYEDFHEPILDRYAQIRAYPNLILVAGSGFGGSDDTIPYITGSWSKKLGYAAMPFDGVLVGSRVMTAKEARTSPAVKQAIVDTPGVPDSQWEGTYKKATGGIITVKSEMGEPIHKLATRGVLLWAELDKEVFSLPAAQQVQELQRRKGSLMKRLNADFQKVWFGIDQQGNPVEISEMTYAEVLTRAVDLLYLKDQQAWIDPSYRSFVADFIRCVENRLSARQPRPRAVFQSALQLDRPQVFLSEFLQAYPAALEDVIVREDEDQLVKLYKQPGRKPLPFIVALDESFEYWFKKDSLWQSERLEAVTNQDVGRICILHGPVAAQYTKVANEPVKQILDNIHKPHVQAILKQQYAGDTSRVPTLDYLYSAGAVSPMLSPQDELLLPHVKHSRSYDPPTLAYDLEGPEENLPTEKQWLALIGGTKPSWRKALLTLNEIVQGKMLVENPIKGLFAPRAGLSVRIIQAGRPQKTVILMRQKSSQGQEKDEATVEIRALSTSEIMLTLRAPMTGGSAGNPPVDLVLYFTYKPTYGNNPIHEVMGTRNQRISRFYEQLWVGNAGDEGTSLQKSADDVQVLTREAILNFTKAIDNRNSAYNGKKNSKLLAPLDMAIVVAWKPLMRCLFTDAVNGDILKLLHLKNDFRVIDNASPMREGDVLSSTAAIESIRIRPDSGKVVRAVATIFKKGTPIITVASEFILQGRYEDYHNTFETKEEQVYKLPLKSKRDVVLLASKPWFRIAAADLSLDDHLDDELTFRLKSSYHFRDANTYSQIETCGTVSCAVGNKDMTIGTVMFKSNSHFLKNPVIDFLTRRGFAYDEVKQLPNAVPLAADVRIEMPTSSDQYAAASGDSNPIHLSRAFARYAGHNEGRVIHGMQTSGLVRGVVELHAAGNDPRRMKAWSASFKGKVSPGETLLVDISHTGMNNGRLIVVATARSESSSVEVFRATAEVAQKPGAYLFTGQGSQKPAMGMDLYETSQAARDVWHTAEQFFVNTYGISILEIVRNNPKEYTVHFGGSRGKAIRENYISLDFEVVNEQGEIESVRAFQEITPSSRSFTYTSSGGLLHETIFTQPALVVMELARFHDMRARGLINEDSCYAGHSLGEYAALAAMGEVFTVEGVTAAVFYRGLTMQKSIELDRSGRDYSMVAANPSRVSKNLSESDLCAIVDSIEAATGGLCEIVNFNVESTQYVCAGDLRSLDCLAGVLDSLVAHPEHLTSLETLNASVPAIVASCLAQTDKKPTPLVLQRGKATIPLKVNVPFHSSLLRPGADTFRRALRKAIPEHMVRPEKLIGRYIPNLTAMPFELSKGYFENVLAISESPFVREILERWDDNNVAVAVC.

The tract at residues 200–565 (IVTVFNGQGV…KAGTAARVIL (366 aa)) is acetyltransferase (AT) domain. Positions 618–863 (SRALGLPPVM…AIVDTPGVPD (246 aa)) are enoyl reductase (ER) domain. The tract at residues 1195 to 1688 (GTKPSWRKAL…SPGETLLVDI (494 aa)) is dehydratase (DH) domain. The region spanning 1606-1708 (EMPTSSDQYA…IVVATARSES (103 aa)) is the MaoC-like domain. Residues 1727-2091 (YLFTGQGSQK…FENVLAISES (365 aa)) form a malonyl/palmitoyl transferase (MT/PT) domain region.

Belongs to the fungal fatty acid synthetase subunit beta family. [Alpha(6)beta(6)] hexamers of two multifunctional subunits (alpha and beta).

The catalysed reaction is acetyl-CoA + n malonyl-CoA + 2n NADPH + 4n H(+) = a long-chain-acyl-CoA + n CoA + n CO2 + 2n NADP(+).. It catalyses the reaction holo-[ACP] + acetyl-CoA = acetyl-[ACP] + CoA. The enzyme catalyses holo-[ACP] + malonyl-CoA = malonyl-[ACP] + CoA. It carries out the reaction a (3R)-hydroxyacyl-[ACP] = a (2E)-enoyl-[ACP] + H2O. The catalysed reaction is a 2,3-saturated acyl-[ACP] + NAD(+) = a (2E)-enoyl-[ACP] + NADH + H(+). It catalyses the reaction (9Z)-octadecenoyl-[ACP] + H2O = (9Z)-octadecenoate + holo-[ACP] + H(+). The protein operates within secondary metabolite biosynthesis. Functionally, fatty acid synthase beta subunit; part of the gene cluster that mediates the biosynthesis of aspercryptins, linear lipopeptides built from six amino acids including 2 highly unusual and nonproteogenic amino acids, 2-amino-octanoic acid (2aoa) and 2-amino-dodecanol (2adol). The core structure of aspercryptins is as follows: Ser/Ala-Thr-Ile/Val-2aoa-Asn-2adol. The first step of aspercryptin biosynthesis is the generation of the fatty acid precursors, octanoic and dodecanoic acids, by the FAS subunits atnF and atnM. The fatty acid precursors are likely transformed into the corresponding alpha-amino fatty acids in three steps. First, they are hydroxylated by the cytochrome P450 monooxygenase atnE, then oxidized to the corresponding alpha-keto acids by the NAD(P)-dependent oxidoreductase atnD, and finally converted to the alpha-amino fatty acids by the PLP-dependent aminotransferases atnH or atnJ. the alpha-amino fatty acids, 2-amino-octanoic and 2-amino-dodecanoic acids, are recognized, activated, and covalently tethered to the NRPS atnA by its fourth and sixth adenylation domains. The second module of atnA is the Thr module and contains an epimerase (E) domain responsible for the epimerization of Thr to D-allo-Thr. Additionally, despite atnA having only one epimerase domain, the first amino acid of aspercryptin A1 is D-Ser, suggesting that serine is either loaded directly as D-Ser on the first module or that the epimerase domain in the threonine module epimerizes both L-Ser and L-Thr. After condensation of the hexapeptide of aspercryptin, the C-terminal reductase (TE) domain might be involved in the reductive release and production of the aldehyde hexapeptide. Further reduction would generate aspercryptins. The variety of aspercryptins produced reflects the flexibility of the atnA NRPS, allowing incorporation of alanine instead of serine, valine for isoleucine, and a C10 fatty amino alcohol instead of the C12 version. AtnB seems to be involved in the selectivity for Ile versus Val by the third module. Moreover, type B, C and D aspercryptins have an additional N-terminal cichorine, acetyl and propionyl group respectively. The chain is Fatty acid synthase beta subunit aflB from Emericella nidulans (strain FGSC A4 / ATCC 38163 / CBS 112.46 / NRRL 194 / M139) (Aspergillus nidulans).